The chain runs to 217 residues: Uracil-DNA glycosylase (217 aa).

Catalysis depends on aspartate 62, which acts as the Proton acceptor.

This sequence belongs to the uracil-DNA glycosylase (UDG) superfamily. UNG family.

It localises to the cytoplasm. It carries out the reaction Hydrolyzes single-stranded DNA or mismatched double-stranded DNA and polynucleotides, releasing free uracil.. Its function is as follows. Excises uracil residues from the DNA which can arise as a result of misincorporation of dUMP residues by DNA polymerase or due to deamination of cytosine. This chain is Uracil-DNA glycosylase, found in Streptococcus equi subsp. equi (strain 4047).